Consider the following 494-residue polypeptide: UPF0371 protein spr0309 (494 aa).

It belongs to the UPF0371 family.

This Streptococcus pneumoniae (strain ATCC BAA-255 / R6) protein is UPF0371 protein spr0309.